Consider the following 160-residue polypeptide: Negative modulator of initiation of replication (160 aa).

The protein belongs to the SeqA family. In terms of assembly, homodimer. Polymerizes to form helical filaments.

Its subcellular location is the cytoplasm. Negative regulator of replication initiation, which contributes to regulation of DNA replication and ensures that replication initiation occurs exactly once per chromosome per cell cycle. Binds to pairs of hemimethylated GATC sequences in the oriC region, thus preventing assembly of replication proteins and re-initiation at newly replicated origins. Repression is relieved when the region becomes fully methylated. The sequence is that of Negative modulator of initiation of replication from Idiomarina loihiensis (strain ATCC BAA-735 / DSM 15497 / L2-TR).